The chain runs to 93 residues: U12-lycotoxin-Ls1a (93 aa).

Residues 1 to 18 (MKFAVILLFSLVVLAVAS) form the signal peptide. Residues 19–38 (ESVEEVRREIDIEDLPEQQR) constitute a propeptide that is removed on maturation.

This sequence belongs to the neurotoxin 31 family. Post-translationally, contains 5 disulfide bonds. In terms of tissue distribution, expressed by the venom gland.

It is found in the secreted. The chain is U12-lycotoxin-Ls1a from Lycosa singoriensis (Wolf spider).